Consider the following 467-residue polypeptide: F-box protein pof9 (467 aa).

One can recognise an F-box domain in the interval 3–49; that stretch reads KSPFLELSYDILLEISTYLDYKDIVHLSETCKSLSYVFDDKTIWHRF. 3 RCC1 repeats span residues 77 to 131, 302 to 354, and 355 to 417; these read RGYA…LLNE, ETFT…YLTS, and DHSI…AAGG.

As to quaternary structure, interacts with skp1.

Its subcellular location is the cytoplasm. The protein resides in the nucleus. The sequence is that of F-box protein pof9 (pof9) from Schizosaccharomyces pombe (strain 972 / ATCC 24843) (Fission yeast).